The primary structure comprises 452 residues: Chaperone SurA (452 aa).

Residues 1–28 (MKKTLRFAAVVSSLAAASALLAAAPAAA) form the signal peptide. PpiC domains follow at residues 186–288 (QQDL…RLVD) and 302–400 (IVQT…QVLS).

The protein localises to the periplasm. It carries out the reaction [protein]-peptidylproline (omega=180) = [protein]-peptidylproline (omega=0). Functionally, chaperone involved in the correct folding and assembly of outer membrane proteins. Recognizes specific patterns of aromatic residues and the orientation of their side chains, which are found more frequently in integral outer membrane proteins. May act in both early periplasmic and late outer membrane-associated steps of protein maturation. This is Chaperone SurA from Burkholderia lata (strain ATCC 17760 / DSM 23089 / LMG 22485 / NCIMB 9086 / R18194 / 383).